Reading from the N-terminus, the 336-residue chain is MSQLYQRHFLRLLDFIPDEINGLLKLASRLKATKKKGDETQYLKGKNIALIFEKDSTRTRCSFEVAAFDQGANVTWLGPSGSQIGHKESIKDTARVLGRMYHAIQYRGHGQQLVESLAEHAGVPVWNGLTNEFHPTQLLADLLTMQEHLPEKTLNQMTLAYVGDTQNNMGNTLLEAAALVGLDLRLVAPKSCWPDPALVAQCRDVAQQTGGKITLTEDIAAGVQGADFIYTDVWVSMGEPKEVWHERITLLRPYQVNMALLQATGNPQVKFLHCLPAFHDDQTLLGQQMAQQYDLHGGMEVTDEVFESAHSVVFDQAENRLHTIKAVMVATLSQQE.

Carbamoyl phosphate-binding positions include 56–59 (STRT), Gln83, Arg107, and 134–137 (HPTQ). L-ornithine is bound by residues Asn168, Asp232, and 236–237 (SM). Residues 274–275 (CL) and Arg320 each bind carbamoyl phosphate.

The protein belongs to the aspartate/ornithine carbamoyltransferase superfamily. OTCase family.

The protein resides in the cytoplasm. It catalyses the reaction carbamoyl phosphate + L-ornithine = L-citrulline + phosphate + H(+). It participates in amino-acid biosynthesis; L-arginine biosynthesis; L-arginine from L-ornithine and carbamoyl phosphate: step 1/3. Functionally, reversibly catalyzes the transfer of the carbamoyl group from carbamoyl phosphate (CP) to the N(epsilon) atom of ornithine (ORN) to produce L-citrulline. In Erwinia tasmaniensis (strain DSM 17950 / CFBP 7177 / CIP 109463 / NCPPB 4357 / Et1/99), this protein is Ornithine carbamoyltransferase.